A 277-amino-acid polypeptide reads, in one-letter code: Probable CCR4-associated factor 1 homolog 10 (277 aa).

Residues D40, E42, D166, and D235 each coordinate a divalent metal cation.

This sequence belongs to the CAF1 family. Component of the CCR4-NOT complex, at least composed of CRR4 and CAF1 proteins. Requires a divalent metal cation as cofactor.

The protein resides in the nucleus. It is found in the cytoplasm. The enzyme catalyses Exonucleolytic cleavage of poly(A) to 5'-AMP.. Functionally, ubiquitous transcription factor required for a diverse set of processes. It is a component of the CCR4 complex involved in the control of gene expression. This chain is Probable CCR4-associated factor 1 homolog 10 (CAF1-10), found in Arabidopsis thaliana (Mouse-ear cress).